A 196-amino-acid polypeptide reads, in one-letter code: MPFVVVITGIPGVGKSTITKLALKKTRAKFRLVNFGDLMFEEAVNMGLVKHRDEMRKLDPLTQKELQLKVAQRIVEIARKEPVLLDTHATIRTPAGYLLGFPREVIEILNPNFIVIIEAAPSEILGRRLRDLKRDRDVETEEQIARHQDLNRAAAIAYAMHSNALIKIIENHEDKGLEEAVNELVKVLDLAVSEYA.

9–17 (GIPGVGKST) contacts ATP.

It belongs to the archaeal adenylate kinase family.

It localises to the cytoplasm. The enzyme catalyses AMP + ATP = 2 ADP. In Thermococcus kodakarensis (strain ATCC BAA-918 / JCM 12380 / KOD1) (Pyrococcus kodakaraensis (strain KOD1)), this protein is Adenylate kinase.